The following is a 246-amino-acid chain: 3-deoxy-manno-octulosonate cytidylyltransferase (246 aa).

This sequence belongs to the KdsB family.

Its subcellular location is the cytoplasm. It catalyses the reaction 3-deoxy-alpha-D-manno-oct-2-ulosonate + CTP = CMP-3-deoxy-beta-D-manno-octulosonate + diphosphate. It functions in the pathway nucleotide-sugar biosynthesis; CMP-3-deoxy-D-manno-octulosonate biosynthesis; CMP-3-deoxy-D-manno-octulosonate from 3-deoxy-D-manno-octulosonate and CTP: step 1/1. Its pathway is bacterial outer membrane biogenesis; lipopolysaccharide biosynthesis. Activates KDO (a required 8-carbon sugar) for incorporation into bacterial lipopolysaccharide in Gram-negative bacteria. The chain is 3-deoxy-manno-octulosonate cytidylyltransferase from Bradyrhizobium sp. (strain BTAi1 / ATCC BAA-1182).